The following is a 154-amino-acid chain: Large ribosomal subunit protein uL13 (154 aa).

It belongs to the universal ribosomal protein uL13 family. Part of the 50S ribosomal subunit.

This protein is one of the early assembly proteins of the 50S ribosomal subunit, although it is not seen to bind rRNA by itself. It is important during the early stages of 50S assembly. The protein is Large ribosomal subunit protein uL13 of Allorhizobium ampelinum (strain ATCC BAA-846 / DSM 112012 / S4) (Agrobacterium vitis (strain S4)).